Reading from the N-terminus, the 144-residue chain is Putative pre-16S rRNA nuclease (144 aa).

The protein belongs to the YqgF nuclease family.

The protein resides in the cytoplasm. Functionally, could be a nuclease involved in processing of the 5'-end of pre-16S rRNA. This chain is Putative pre-16S rRNA nuclease, found in Picosynechococcus sp. (strain ATCC 27264 / PCC 7002 / PR-6) (Agmenellum quadruplicatum).